Here is an 800-residue protein sequence, read N- to C-terminus: Protocadherin beta-10 (800 aa).

Residues Met1–Ala26 form the signal peptide. Residues Gly27–Leu692 are Extracellular-facing. 5 consecutive Cadherin domains span residues Val35–Phe133, Thr138–Phe242, Tyr247–Leu347, Phe352–Phe451, and Tyr456–Val561. N-linked (GlcNAc...) asparagine glycosylation is found at Asn169 and Asn181. Asn418 and Asn436 each carry an N-linked (GlcNAc...) asparagine glycan. N-linked (GlcNAc...) asparagine glycosylation occurs at Asn567. Positions Gly568 to Leu671 constitute a Cadherin 6 domain. The helical transmembrane segment at Val693 to Val713 threads the bilayer. Residues Arg714–Gln800 are Cytoplasmic-facing.

It localises to the cell membrane. Functionally, potential calcium-dependent cell-adhesion protein. May be involved in the establishment and maintenance of specific neuronal connections in the brain. The sequence is that of Protocadherin beta-10 (PCDHB10) from Homo sapiens (Human).